The sequence spans 213 residues: ER lumen protein-retaining receptor (213 aa).

Residues 1 to 2 lie on the Lumenal side of the membrane; the sequence is MN. A helical membrane pass occupies residues 3 to 21; that stretch reads IFRITADLAHAVAIVILLL. The Cytoplasmic portion of the chain corresponds to 22–35; the sequence is KIWKSRSCEGISGR. A helical transmembrane segment spans residues 36 to 53; that stretch reads SQILFAVTFFTRYLDLFT. Over 54-61 the chain is Lumenal; it reads SFYSLYNT. Residues 62-80 form a helical membrane-spanning segment; it reads VMKVLFLAGSIGTVYLMWV. Residues 81–96 are Cytoplasmic-facing; sequence KFKATYDRNNDTFRIE. Residues 97–110 form a helical membrane-spanning segment; sequence FLVIPSIILALIIN. At 111–117 the chain is on the lumenal side; that stretch reads HEFMFME. Residues 118-137 traverse the membrane as a helical segment; that stretch reads VMWTFSIYLEAVAIMPQLFM. Residues 138 to 149 lie on the Cytoplasmic side of the membrane; that stretch reads LSRTGNAETITA. A helical transmembrane segment spans residues 150 to 168; the sequence is HYLFALGSYRFLYIFNWVY. Residues 169–178 lie on the Lumenal side of the membrane; that stretch reads RYYTESFFDP. Residues 179–199 traverse the membrane as a helical segment; the sequence is IAVVAGIVQTVLYADFFYLYI. Over 200-213 the chain is Cytoplasmic; the sequence is TRVIQSNRQFEMSA.

It belongs to the ERD2 family.

It localises to the endoplasmic reticulum membrane. Its function is as follows. Required for the retention of luminal endoplasmic reticulum proteins. Determines the specificity of the luminal ER protein retention system. Also required for normal vesicular traffic through the Golgi. This is ER lumen protein-retaining receptor (erd-2.1) from Caenorhabditis briggsae.